Consider the following 967-residue polypeptide: Isoleucine--tRNA ligase 2 (967 aa).

Positions 58–68 (PYANGDIHIGH) match the 'HIGH' region motif. A disordered region spans residues 430–463 (EADPGRADVTEEAGATGEARKVGKAEEAEEAGPV). Residue Glu-598 participates in L-isoleucyl-5'-AMP binding. The short motif at 639 to 643 (KMSKS) is the 'KMSKS' region element. Lys-642 contacts ATP. 4 residues coordinate Zn(2+): Cys-922, Cys-925, Cys-942, and Cys-945.

Belongs to the class-I aminoacyl-tRNA synthetase family. IleS type 1 subfamily. In terms of assembly, monomer. Requires Zn(2+) as cofactor.

It is found in the cytoplasm. It carries out the reaction tRNA(Ile) + L-isoleucine + ATP = L-isoleucyl-tRNA(Ile) + AMP + diphosphate. Functionally, catalyzes the attachment of isoleucine to tRNA(Ile). As IleRS can inadvertently accommodate and process structurally similar amino acids such as valine, to avoid such errors it has two additional distinct tRNA(Ile)-dependent editing activities. One activity is designated as 'pretransfer' editing and involves the hydrolysis of activated Val-AMP. The other activity is designated 'posttransfer' editing and involves deacylation of mischarged Val-tRNA(Ile). This is Isoleucine--tRNA ligase 2 from Burkholderia pseudomallei (strain K96243).